Consider the following 440-residue polypeptide: Trigger factor (440 aa).

Positions 162–247 constitute a PPIase FKBP-type domain; the sequence is GDRVTFDFTG…LKKIEKFQLP (86 aa).

Belongs to the FKBP-type PPIase family. Tig subfamily.

The protein resides in the cytoplasm. It catalyses the reaction [protein]-peptidylproline (omega=180) = [protein]-peptidylproline (omega=0). In terms of biological role, involved in protein export. Acts as a chaperone by maintaining the newly synthesized protein in an open conformation. Functions as a peptidyl-prolyl cis-trans isomerase. This Hamiltonella defensa subsp. Acyrthosiphon pisum (strain 5AT) protein is Trigger factor.